The sequence spans 299 residues: Leucine zipper transcription factor-like protein 1 (299 aa).

The tract at residues 145-299 (GTTELLNKEI…KRLAKYESED (155 aa)) is interaction with BSS9. Residues 145 to 299 (GTTELLNKEI…KRLAKYESED (155 aa)) adopt a coiled-coil conformation.

This sequence belongs to the LZTFL1 family. As to quaternary structure, self-associates. Interacts with BBS9; the interaction mediates the association of LZTL1 with the BBsome complex and regulates BBSome ciliary trafficking.

The protein resides in the cytoplasm. Functionally, regulates ciliary localization of the BBSome complex. Together with the BBSome complex, controls SMO ciliary trafficking and contributes to the sonic hedgehog (SHH) pathway regulation. May play a role in neurite outgrowth. May have tumor suppressor function. This Rattus norvegicus (Rat) protein is Leucine zipper transcription factor-like protein 1 (Lztfl1).